Consider the following 88-residue polypeptide: Mitochondrial import inner membrane translocase subunit tim9 (88 aa).

Residues 35–59 carry the Twin CX3C motif motif; it reads CFTACVDDFTSKALSGRESGCISRC. Disulfide bonds link C35-C59 and C39-C55.

This sequence belongs to the small Tim family. In terms of assembly, heterohexamer; composed of 3 copies of tim9 and 3 copies of tim10, named soluble 70 kDa complex. Associates with the tim22 complex, whose core is composed of tim22 and tim54. Interacts with the transmembrane regions of multi-pass transmembrane proteins in transit.

Its subcellular location is the mitochondrion inner membrane. Its function is as follows. Mitochondrial intermembrane chaperone that participates in the import and insertion of multi-pass transmembrane proteins into the mitochondrial inner membrane. Also required for the transfer of beta-barrel precursors from the TOM complex to the sorting and assembly machinery (SAM complex) of the outer membrane. Acts as a chaperone-like protein that protects the hydrophobic precursors from aggregation and guide them through the mitochondrial intermembrane space. The polypeptide is Mitochondrial import inner membrane translocase subunit tim9 (tim9) (Neurospora crassa (strain ATCC 24698 / 74-OR23-1A / CBS 708.71 / DSM 1257 / FGSC 987)).